The sequence spans 621 residues: UvrABC system protein C (621 aa).

In terms of domain architecture, GIY-YIG spans Thr20–Val98. Residues Asp207 to Met242 enclose the UVR domain.

It belongs to the UvrC family. In terms of assembly, interacts with UvrB in an incision complex.

It is found in the cytoplasm. Its function is as follows. The UvrABC repair system catalyzes the recognition and processing of DNA lesions. UvrC both incises the 5' and 3' sides of the lesion. The N-terminal half is responsible for the 3' incision and the C-terminal half is responsible for the 5' incision. The polypeptide is UvrABC system protein C (Xylella fastidiosa (strain M23)).